The sequence spans 55 residues: Large ribosomal subunit protein bL33 (55 aa).

It belongs to the bacterial ribosomal protein bL33 family.

The protein is Large ribosomal subunit protein bL33 of Gluconacetobacter diazotrophicus (strain ATCC 49037 / DSM 5601 / CCUG 37298 / CIP 103539 / LMG 7603 / PAl5).